The following is a 146-amino-acid chain: Probable actin-related protein 2/3 complex subunit 5 (146 aa).

Belongs to the ARPC5 family. Component of the Arp2/3 complex composed of ARP2, ARP3, ARPC1B/p41-ARC, ARPC2/p34-ARC, ARPC3/p21-ARC, ARPC4/p20-ARC and ARPC5/p16-ARC.

It localises to the cytoplasm. The protein localises to the cytoskeleton. In terms of biological role, functions as a component of the Arp2/3 complex which is involved in regulation of actin polymerization and together with an activating nucleation-promoting factor (NPF) mediates the formation of branched actin networks. The sequence is that of Probable actin-related protein 2/3 complex subunit 5 from Caenorhabditis elegans.